A 379-amino-acid polypeptide reads, in one-letter code: Lipid-A-disaccharide synthase (379 aa).

Belongs to the LpxB family.

The catalysed reaction is a lipid X + a UDP-2-N,3-O-bis[(3R)-3-hydroxyacyl]-alpha-D-glucosamine = a lipid A disaccharide + UDP + H(+). It participates in bacterial outer membrane biogenesis; LPS lipid A biosynthesis. Functionally, condensation of UDP-2,3-diacylglucosamine and 2,3-diacylglucosamine-1-phosphate to form lipid A disaccharide, a precursor of lipid A, a phosphorylated glycolipid that anchors the lipopolysaccharide to the outer membrane of the cell. The protein is Lipid-A-disaccharide synthase of Idiomarina loihiensis (strain ATCC BAA-735 / DSM 15497 / L2-TR).